A 119-amino-acid chain; its full sequence is Ribosome-binding factor A (119 aa).

Belongs to the RbfA family. In terms of assembly, monomer. Binds 30S ribosomal subunits, but not 50S ribosomal subunits or 70S ribosomes.

It is found in the cytoplasm. In terms of biological role, one of several proteins that assist in the late maturation steps of the functional core of the 30S ribosomal subunit. Associates with free 30S ribosomal subunits (but not with 30S subunits that are part of 70S ribosomes or polysomes). Required for efficient processing of 16S rRNA. May interact with the 5'-terminal helix region of 16S rRNA. This Pseudothermotoga lettingae (strain ATCC BAA-301 / DSM 14385 / NBRC 107922 / TMO) (Thermotoga lettingae) protein is Ribosome-binding factor A.